A 757-amino-acid polypeptide reads, in one-letter code: MDYLESLDFPKVVEIVKKYALSDLGRKHLDTLKPTVNPWDELELVEELLNYFARWGEPPIKGLNDISQEVERVKSGSALEPWELLRVSVFLEGCDILKKDFEKREYSRLKETFSRLSSFRDFVEEVNRCIEQDGEISDRASPRLREIRTEKKRLSSEIKRKADDFVRTHSQILQEQMYVYRDGRYLFPVKASMRNAVRGIVHHLSSSGATVFLEPDEFVELNNRVRLLEEEERLEISRILRQLTNILLSRLNDLERNVELIARFDSLYARVKFAREFNGTVVKPSSRIRLVNARHPLIPKERVVPINLELPPNKRGFIITGPNMGGKTVTVKTVGLFTALMMSGFPLPCDEGTELKVFPKIMADIGEEQSIEQSLSTFSSHMKKIVEIVKNADSDSLVILDELGSGTDPVEGAALAVAIIEDLLEKGATIFVTTHLTPVKVFAMNHPLLLNASMEFDPETLSPTYRVLVGVPGGSHAFQIAEKLGLDKRIIENARSRLSREEMELEGLIRSLHEKISLLEEEKRKLQKEREEYMKLREKYEEDYKKLRRMKIEEFDKELRELNDYIRKVKKELDQAIHVAKTGSVDEMREAVKTIEKEKKDLEQKRIEEATEEEIKPGDHVKMEGGTSVGKVVEVKSGTALVDFGFLRLKVPVSKLKKAKKEEKEESSAVSYRPSSFRTEIDIRGMTVEEAEPVVKKFIDDLMMNGISKGYIIHGKGTGKLASGVWEILRKDKRVVSFRFGTPSEGGTGVTVVEVKV.

An ATP-binding site is contributed by 321 to 328 (GPNMGGKT). A Smr domain is found at 681-756 (IDIRGMTVEE…GTGVTVVEVK (76 aa)).

This sequence belongs to the DNA mismatch repair MutS family. MutS2 subfamily. Homodimer. Binds to stalled ribosomes, contacting rRNA.

In terms of biological role, endonuclease that is involved in the suppression of homologous recombination and thus may have a key role in the control of bacterial genetic diversity. Its function is as follows. Acts as a ribosome collision sensor, splitting the ribosome into its 2 subunits. Detects stalled/collided 70S ribosomes which it binds and splits by an ATP-hydrolysis driven conformational change. Acts upstream of the ribosome quality control system (RQC), a ribosome-associated complex that mediates the extraction of incompletely synthesized nascent chains from stalled ribosomes and their subsequent degradation. Probably generates substrates for RQC. This Thermotoga petrophila (strain ATCC BAA-488 / DSM 13995 / JCM 10881 / RKU-1) protein is Endonuclease MutS2.